Reading from the N-terminus, the 627-residue chain is DNA-directed RNA polymerase subunit gamma (627 aa).

Zn(2+) is bound by residues C70, C72, C85, and C88. Mg(2+) is bound by residues D468, D470, and D472.

This sequence belongs to the RNA polymerase beta' chain family. RpoC1 subfamily. In cyanobacteria the RNAP catalytic core is composed of 2 alpha, 1 beta, 1 beta', 1 gamma and 1 omega subunit. When a sigma factor is associated with the core the holoenzyme is formed, which can initiate transcription. Mg(2+) is required as a cofactor. Zn(2+) serves as cofactor.

The enzyme catalyses RNA(n) + a ribonucleoside 5'-triphosphate = RNA(n+1) + diphosphate. DNA-dependent RNA polymerase catalyzes the transcription of DNA into RNA using the four ribonucleoside triphosphates as substrates. The protein is DNA-directed RNA polymerase subunit gamma of Synechococcus sp. (strain JA-2-3B'a(2-13)) (Cyanobacteria bacterium Yellowstone B-Prime).